Reading from the N-terminus, the 332-residue chain is Apoptosis-enhancing nuclease (332 aa).

The tract at residues 1-102 is disordered; the sequence is MVPREVPESS…VPREAPSSGP (102 aa). The span at 20 to 36 shows a compositional bias: basic residues; it reads ARRRHKRRSRQHQRFMA. A Nucleolar localization signal motif is present at residues 21-29; it reads RRRHKRRSR. Over residues 63–73 the composition is skewed to polar residues; that stretch reads QTPAGTEASGN. The Exonuclease domain maps to 105–261; it reads YVAIDCEMVG…EDAMTAMELY (157 aa). The Nuclear localization signal motif lies at 160 to 183; it reads RQHMHKAIPFQVAQKEILKLLKGK. The interval 272 to 332 is disordered; that stretch reads VASTAKAHPE…EGQGARSAPP (61 aa). Over residues 310 to 321 the composition is skewed to basic and acidic residues; sequence GDTREAQDRQEG.

It localises to the nucleus. Its subcellular location is the nucleolus. In terms of biological role, exonuclease with activity against single- and double-stranded DNA and RNA. Mediates p53-induced apoptosis. When induced by p53 following DNA damage, digests double-stranded DNA to form single-stranded DNA and amplifies DNA damage signals, leading to enhancement of apoptosis. This chain is Apoptosis-enhancing nuclease, found in Rattus norvegicus (Rat).